The following is a 553-amino-acid chain: PE cleavage protein A (553 aa).

A PE domain is found at 1–92; it reads MSLLVVAPEW…SAGSYSAAEA (92 aa). Asp293 is a catalytic residue.

Belongs to the mycobacterial PE family. PGRS subfamily. Undergoes auto-proteolytic processing.

Its subcellular location is the secreted. It is found in the cell surface. Functionally, aspartic protease that processes the lipase LipY and other PE_PGRS proteins. Can also cleave itself. Cleaves LipY both inside the PE domain, before amino acid 98, and after amino acids 136 and 149. Involved in virulence. This is PE cleavage protein A from Mycobacterium marinum (strain ATCC BAA-535 / M).